We begin with the raw amino-acid sequence, 426 residues long: Serine--tRNA ligase (426 aa).

Position 233 to 235 (233 to 235) interacts with L-serine; it reads TAE. Position 264-266 (264-266) interacts with ATP; sequence RSE. An L-serine-binding site is contributed by glutamate 287. 351–354 is a binding site for ATP; that stretch reads EISS. Serine 387 provides a ligand contact to L-serine.

Belongs to the class-II aminoacyl-tRNA synthetase family. Type-1 seryl-tRNA synthetase subfamily. Homodimer. The tRNA molecule binds across the dimer.

Its subcellular location is the cytoplasm. It catalyses the reaction tRNA(Ser) + L-serine + ATP = L-seryl-tRNA(Ser) + AMP + diphosphate + H(+). It carries out the reaction tRNA(Sec) + L-serine + ATP = L-seryl-tRNA(Sec) + AMP + diphosphate + H(+). The protein operates within aminoacyl-tRNA biosynthesis; selenocysteinyl-tRNA(Sec) biosynthesis; L-seryl-tRNA(Sec) from L-serine and tRNA(Sec): step 1/1. Functionally, catalyzes the attachment of serine to tRNA(Ser). Is also able to aminoacylate tRNA(Sec) with serine, to form the misacylated tRNA L-seryl-tRNA(Sec), which will be further converted into selenocysteinyl-tRNA(Sec). The chain is Serine--tRNA ligase from Pseudomonas syringae pv. syringae (strain B728a).